The sequence spans 59 residues: Photosystem II reaction center protein K (59 aa).

Positions 1–22 (MLNIFSLICLNSDLYSSRFFLA) are excised as a propeptide. A helical membrane pass occupies residues 38–58 (MPVIPLFFLLLAFVWQAAVSF).

It belongs to the PsbK family. In terms of assembly, PSII is composed of 1 copy each of membrane proteins PsbA, PsbB, PsbC, PsbD, PsbE, PsbF, PsbH, PsbI, PsbJ, PsbK, PsbL, PsbM, PsbT, PsbX, PsbY, PsbZ, Psb30/Ycf12, at least 3 peripheral proteins of the oxygen-evolving complex and a large number of cofactors. It forms dimeric complexes.

The protein resides in the plastid. The protein localises to the chloroplast thylakoid membrane. One of the components of the core complex of photosystem II (PSII). PSII is a light-driven water:plastoquinone oxidoreductase that uses light energy to abstract electrons from H(2)O, generating O(2) and a proton gradient subsequently used for ATP formation. It consists of a core antenna complex that captures photons, and an electron transfer chain that converts photonic excitation into a charge separation. This chain is Photosystem II reaction center protein K, found in Oenothera elata subsp. hookeri (Hooker's evening primrose).